We begin with the raw amino-acid sequence, 413 residues long: Serine hydroxymethyltransferase (413 aa).

(6S)-5,6,7,8-tetrahydrofolate-binding positions include leucine 116 and 120 to 122 (GHL). Lysine 225 carries the N6-(pyridoxal phosphate)lysine modification. 349–351 (SPF) lines the (6S)-5,6,7,8-tetrahydrofolate pocket.

The protein belongs to the SHMT family. Homodimer. Pyridoxal 5'-phosphate serves as cofactor.

The protein localises to the cytoplasm. The enzyme catalyses (6R)-5,10-methylene-5,6,7,8-tetrahydrofolate + glycine + H2O = (6S)-5,6,7,8-tetrahydrofolate + L-serine. Its pathway is one-carbon metabolism; tetrahydrofolate interconversion. It functions in the pathway amino-acid biosynthesis; glycine biosynthesis; glycine from L-serine: step 1/1. Its function is as follows. Catalyzes the reversible interconversion of serine and glycine with tetrahydrofolate (THF) serving as the one-carbon carrier. This reaction serves as the major source of one-carbon groups required for the biosynthesis of purines, thymidylate, methionine, and other important biomolecules. Also exhibits THF-independent aldolase activity toward beta-hydroxyamino acids, producing glycine and aldehydes, via a retro-aldol mechanism. The polypeptide is Serine hydroxymethyltransferase (Levilactobacillus brevis (strain ATCC 367 / BCRC 12310 / CIP 105137 / JCM 1170 / LMG 11437 / NCIMB 947 / NCTC 947) (Lactobacillus brevis)).